We begin with the raw amino-acid sequence, 1363 residues long: Clustered mitochondria protein homolog (1363 aa).

2 TPR repeats span residues 29–63 (LPSFFNVGDDYLTIPSSYEENIADLKQALNIIVLC) and 120–154 (KEKSYNLASIYEQISRFREVIGLHYIDRLSNDIGS). Residues 172–191 (KEAKKEESTEKEQQEKEELS) form a disordered region. The TPR 3 repeat unit spans residues 283 to 316 (STINFNPTIKINEKGKFNKSYLLYDLVCQLSPLF). The Clu domain maps to 361-631 (DLSRSQLSSL…RTTPRDIEFI (271 aa)). The segment at 521-544 (PVITSPTTDAEGKNEAEEPESEPV) is disordered. One copy of the TPR 4 repeat lies at 548 to 581 (VYGLSSDGSRILEDKSFEEPLKQIGDFFHLKPHK). A compositionally biased stretch (basic and acidic residues) spans 799-832 (AKAEKKREEEKEKEEKEATESEDKKEKKEDKEDA). The disordered stretch occupies residues 799 to 844 (AKAEKKREEEKEKEEKEATESEDKKEKKEDKEDAEKEEAEAEEEVP). Residues 833 to 842 (EKEEAEAEEE) are compositionally biased toward acidic residues. 4 TPR repeats span residues 1057 to 1090 (VEEIYSNARSHLVQGNKEMGMALFNELLAINESI), 1141 to 1174 (ITAYMNSAYYESSNEQYLNSLKLYKEAMNTWSLV), 1183 to 1216 (INTLTNLSESLLKIKAYDSALELLQEALEITKKL), and 1225 to 1258 (GFIYYRIANIVVTLNKFKESKELFDKAYDIFMKL). The segment at 1291-1363 (QQETQKKSKT…SGSKKSNKKK (73 aa)) is disordered. Over residues 1330–1342 (PPQSNPEIANQSI) the composition is skewed to polar residues.

It belongs to the CLU family. In terms of assembly, may associate with the eukaryotic translation initiation factor 3 (eIF-3) complex.

It is found in the cytoplasm. In terms of biological role, mRNA-binding protein involved in proper cytoplasmic distribution of mitochondria. The protein is Clustered mitochondria protein homolog of Candida albicans (strain SC5314 / ATCC MYA-2876) (Yeast).